Consider the following 271-residue polypeptide: Formamidopyrimidine-DNA glycosylase (271 aa).

P2 serves as the catalytic Schiff-base intermediate with DNA. The active-site Proton donor is E3. The Proton donor; for beta-elimination activity role is filled by K56. Residues H89, R107, and K151 each contribute to the DNA site. The FPG-type zinc finger occupies 236–270 (NVYGRAGLPCRQCGTPVRLLRQGQRSTYFCPHCQR). R260 acts as the Proton donor; for delta-elimination activity in catalysis.

The protein belongs to the FPG family. Monomer. Zn(2+) is required as a cofactor.

It carries out the reaction Hydrolysis of DNA containing ring-opened 7-methylguanine residues, releasing 2,6-diamino-4-hydroxy-5-(N-methyl)formamidopyrimidine.. The enzyme catalyses 2'-deoxyribonucleotide-(2'-deoxyribose 5'-phosphate)-2'-deoxyribonucleotide-DNA = a 3'-end 2'-deoxyribonucleotide-(2,3-dehydro-2,3-deoxyribose 5'-phosphate)-DNA + a 5'-end 5'-phospho-2'-deoxyribonucleoside-DNA + H(+). Functionally, involved in base excision repair of DNA damaged by oxidation or by mutagenic agents. Acts as a DNA glycosylase that recognizes and removes damaged bases. Has a preference for oxidized purines, such as 7,8-dihydro-8-oxoguanine (8-oxoG). Has AP (apurinic/apyrimidinic) lyase activity and introduces nicks in the DNA strand. Cleaves the DNA backbone by beta-delta elimination to generate a single-strand break at the site of the removed base with both 3'- and 5'-phosphates. In Acidovorax sp. (strain JS42), this protein is Formamidopyrimidine-DNA glycosylase.